We begin with the raw amino-acid sequence, 257 residues long: NH(3)-dependent NAD(+) synthetase (257 aa).

32–39 (GLSGGVDS) provides a ligand contact to ATP. Asp38 is a binding site for Mg(2+). Arg113 contributes to the deamido-NAD(+) binding site. Thr133 contributes to the ATP binding site. Residue Glu138 participates in Mg(2+) binding. ATP contacts are provided by Lys162 and Ser184.

Belongs to the NAD synthetase family. As to quaternary structure, homodimer.

It carries out the reaction deamido-NAD(+) + NH4(+) + ATP = AMP + diphosphate + NAD(+) + H(+). It functions in the pathway cofactor biosynthesis; NAD(+) biosynthesis; NAD(+) from deamido-NAD(+) (ammonia route): step 1/1. Functionally, catalyzes the ATP-dependent amidation of deamido-NAD to form NAD. Uses ammonia as a nitrogen source. The protein is NH(3)-dependent NAD(+) synthetase of Wolinella succinogenes (strain ATCC 29543 / DSM 1740 / CCUG 13145 / JCM 31913 / LMG 7466 / NCTC 11488 / FDC 602W) (Vibrio succinogenes).